Here is a 392-residue protein sequence, read N- to C-terminus: Phospho-N-acetylmuramoyl-pentapeptide-transferase (392 aa).

10 helical membrane passes run 28–48 (IIAAGVFALLLGMLIGPKLIA), 76–96 (TMGGALILLCIAAGTLLFADL), 101–121 (VWVMLLLTLGYGFIGFLDDWL), 137–157 (MVLQTFFFLVAVFGLLTTWTL), 181–201 (WFNPDLGWFYVFFAWIVVVGT), 213–233 (GLAIVPTIVSAITFAVLCYVA), 268–288 (GAELAVFCAAIVGAGISFLWF), 295–315 (VFMGDIGSLALGGALGGLAML), 320–340 (VVSAIIHGIFFAEILSVMIQV), and 369–389 (KIIVRFWIVSILCGGVALLSL).

This sequence belongs to the glycosyltransferase 4 family. MraY subfamily. It depends on Mg(2+) as a cofactor.

It localises to the cell inner membrane. It catalyses the reaction UDP-N-acetyl-alpha-D-muramoyl-L-alanyl-gamma-D-glutamyl-meso-2,6-diaminopimeloyl-D-alanyl-D-alanine + di-trans,octa-cis-undecaprenyl phosphate = di-trans,octa-cis-undecaprenyl diphospho-N-acetyl-alpha-D-muramoyl-L-alanyl-D-glutamyl-meso-2,6-diaminopimeloyl-D-alanyl-D-alanine + UMP. The protein operates within cell wall biogenesis; peptidoglycan biosynthesis. Catalyzes the initial step of the lipid cycle reactions in the biosynthesis of the cell wall peptidoglycan: transfers peptidoglycan precursor phospho-MurNAc-pentapeptide from UDP-MurNAc-pentapeptide onto the lipid carrier undecaprenyl phosphate, yielding undecaprenyl-pyrophosphoryl-MurNAc-pentapeptide, known as lipid I. The protein is Phospho-N-acetylmuramoyl-pentapeptide-transferase of Myxococcus xanthus (strain DK1622).